Consider the following 508-residue polypeptide: Pyruvate kinase (508 aa).

Residue arginine 56 coordinates substrate. 4 residues coordinate K(+): asparagine 58, serine 60, aspartate 90, and threonine 91. 58–61 (NFSH) provides a ligand contact to ATP. Positions 97 and 185 each coordinate ATP. Glutamate 251 lines the Mg(2+) pocket. Residues glycine 274, aspartate 275, and threonine 307 each contribute to the substrate site. Residue aspartate 275 coordinates Mg(2+).

This sequence belongs to the pyruvate kinase family. As to quaternary structure, homotetramer. It depends on Mg(2+) as a cofactor. The cofactor is K(+).

It carries out the reaction pyruvate + ATP = phosphoenolpyruvate + ADP + H(+). It functions in the pathway carbohydrate degradation; glycolysis; pyruvate from D-glyceraldehyde 3-phosphate: step 5/5. Regulated by phosphoenolpyruvate substrate and is allosterically activated by ribose-5-phosphate, AMP and other nucleoside monophosphates but not by fructose-1,6-bisphosphate. The polypeptide is Pyruvate kinase (pyk) (Mycoplasma genitalium (strain ATCC 33530 / DSM 19775 / NCTC 10195 / G37) (Mycoplasmoides genitalium)).